The chain runs to 630 residues: 1-deoxy-D-xylulose-5-phosphate synthase (630 aa).

Thiamine diphosphate is bound by residues H73 and 114–116 (SHA). D146 serves as a coordination point for Mg(2+). Residues 147 to 148 (GA), N176, F287, and E371 contribute to the thiamine diphosphate site. Residue N176 participates in Mg(2+) binding.

Belongs to the transketolase family. DXPS subfamily. Homodimer. Requires Mg(2+) as cofactor. The cofactor is thiamine diphosphate.

The catalysed reaction is D-glyceraldehyde 3-phosphate + pyruvate + H(+) = 1-deoxy-D-xylulose 5-phosphate + CO2. It functions in the pathway metabolic intermediate biosynthesis; 1-deoxy-D-xylulose 5-phosphate biosynthesis; 1-deoxy-D-xylulose 5-phosphate from D-glyceraldehyde 3-phosphate and pyruvate: step 1/1. Its function is as follows. Catalyzes the acyloin condensation reaction between C atoms 2 and 3 of pyruvate and glyceraldehyde 3-phosphate to yield 1-deoxy-D-xylulose-5-phosphate (DXP). This Corynebacterium jeikeium (strain K411) protein is 1-deoxy-D-xylulose-5-phosphate synthase.